Here is a 380-residue protein sequence, read N- to C-terminus: Succinyl-diaminopimelate desuccinylase (380 aa).

His-69 serves as a coordination point for Zn(2+). Residue Asp-71 is part of the active site. Residue Asp-102 coordinates Zn(2+). Glu-135 serves as the catalytic Proton acceptor. Zn(2+) is bound by residues Glu-136, Glu-164, and His-353.

The protein belongs to the peptidase M20A family. DapE subfamily. In terms of assembly, homodimer. Zn(2+) serves as cofactor. Requires Co(2+) as cofactor.

The enzyme catalyses N-succinyl-(2S,6S)-2,6-diaminopimelate + H2O = (2S,6S)-2,6-diaminopimelate + succinate. Its pathway is amino-acid biosynthesis; L-lysine biosynthesis via DAP pathway; LL-2,6-diaminopimelate from (S)-tetrahydrodipicolinate (succinylase route): step 3/3. In terms of biological role, catalyzes the hydrolysis of N-succinyl-L,L-diaminopimelic acid (SDAP), forming succinate and LL-2,6-diaminopimelate (DAP), an intermediate involved in the bacterial biosynthesis of lysine and meso-diaminopimelic acid, an essential component of bacterial cell walls. The chain is Succinyl-diaminopimelate desuccinylase from Cereibacter sphaeroides (strain ATCC 17025 / ATH 2.4.3) (Rhodobacter sphaeroides).